A 284-amino-acid polypeptide reads, in one-letter code: Ribosome-associated protein oga1 (284 aa).

Positions 1-284 are disordered; that stretch reads MSVASKNLFD…LSETDFPALA (284 aa). A compositionally biased stretch (basic and acidic residues) spans 22-36; the sequence is TEKKTAASRDKKRSD. Phosphoserine occurs at positions 37 and 51. 2 stretches are compositionally biased toward basic and acidic residues: residues 52-73 and 119-141; these read RKRD…ADQP and GREF…ERGW. Phosphothreonine is present on Thr-160. Ser-162 carries the post-translational modification Phosphoserine. The residue at position 166 (Thr-166) is a Phosphothreonine. Composition is skewed to basic and acidic residues over residues 172-186 and 194-209; these read ENVK…ERKS and TVEK…KSAP. Low complexity predominate over residues 214-224; it reads ASLKKSASQKK. A compositionally biased stretch (basic and acidic residues) spans 226–237; it reads AAKESKPKKVLL. Positions 245–254 are enriched in low complexity; sequence ARPARGGRPN. The span at 263-277 shows a compositional bias: polar residues; sequence ETASKTQQAPPTLSE.

Belongs to the STM1 family. Associates with mature 80S ribosomes. Binds to the head domain of the 40S ribosomal subunit and prevents mRNA binding by inserting its alpha-helix domain towards the mRNA entry tunnel at the decoding site, where it blocks the binding of tRNA and mRNA at the A- and P-sites. Interacts with eEF2; interaction sequesters eEF2 at the A-site of the ribosome, thereby blocking the interaction sites of the mRNA-tRNA complex, promoting ribosome stabilization and hibernation. Interacts with sad1. Post-translationally, phosphorylation by TORC1 upon nutrient replenishment inhibits STM1 and causes its release from dormant ribosomes.

It is found in the cytoplasm. Functionally, ribosome preservation factor that protect a small pool of nontranslating, vacant ribosomes in cells under nutrient starvation conditions. Under nutrient-limiting conditions, cells reduce ribosome biogenesis and degrade ribosomes via autophagy (ribophagy) or proteasomal degradation. To avoid excessive degradation during starvation, STM1 binds to and protects 80S ribosomes from proteasomal degradation. Under nutrient-sufficient conditions, TORC1 phosphorylates and inhibits STM1 to prevent formation of dormant 80S ribosomes. Acts as an inhibitor of mRNA translation by promoting ribosome hibernation: clamps the two ribosomal subunits, thereby preventing their dissociation, and inhibits translation by excluding mRNA-binding. Acts via its association with eEF2, promoting ribosome stabilization and storage in an inactive state. May also repress translation by preventing association of eEF3 with ribosomes. Binds specifically G4 quadruplex (these are four-stranded right-handed helices, stabilized by guanine base quartets) and purine motif triplex (characterized by a third, antiparallel purine-rich DNA strand located within the major groove of a homopurine stretch of duplex DNA) nucleic acid structures. These structures may be present at telomeres or in rRNAs. Extends chronological lifespan when overexpressed. The sequence is that of Ribosome-associated protein oga1 from Schizosaccharomyces pombe (strain 972 / ATCC 24843) (Fission yeast).